Here is a 300-residue protein sequence, read N- to C-terminus: Ribosomal protein bS6--L-glutamate ligase (300 aa).

One can recognise an ATP-grasp domain in the interval 104–287; that stretch reads LQLLARQGID…IAGRMIQWIE (184 aa). ATP contacts are provided by residues Lys-141, 178–179, Asp-187, and 211–213; these read EY and RSN. Mg(2+) contacts are provided by Asp-248, Glu-260, and Asn-262. 3 residues coordinate Mn(2+): Asp-248, Glu-260, and Asn-262.

This sequence belongs to the RimK family. Mg(2+) is required as a cofactor. The cofactor is Mn(2+).

Functionally, an L-glutamate ligase that catalyzes the ATP-dependent post-translational addition of glutamate residues to the C-terminus of ribosomal protein bS6 (RpsF). Is also able to catalyze the synthesis of poly-alpha-glutamate in vitro, via ATP hydrolysis from unprotected glutamate as substrate. The number of glutamate residues added to either RpsF or to poly-alpha-glutamate changes with pH. This Salmonella agona (strain SL483) protein is Ribosomal protein bS6--L-glutamate ligase.